Reading from the N-terminus, the 464-residue chain is Opioid growth factor receptor-like protein 1 (464 aa).

Disordered stretches follow at residues 1–91 (MGNL…AKPK) and 309–464 (ENFI…TSSG). Positions 43–59 (QQHDEPEQPKQPPERAG) are enriched in basic and acidic residues. Residues 74-86 (AAGAEQGGESTEG) show a composition bias toward low complexity. The span at 316–325 (PKKELPERSK) shows a compositional bias: basic and acidic residues. Residues 327-342 (QKTPTLPASGSNGQTS) are compositionally biased toward polar residues. Basic and acidic residues-rich tracts occupy residues 363-382 (SVEE…DKPS), 390-400 (PKPRNTEKDSA), and 425-439 (SEKD…KDSE). The segment covering 452 to 464 (AQQNATNPQTSSG) has biased composition (polar residues).

It belongs to the opioid growth factor receptor family.

The polypeptide is Opioid growth factor receptor-like protein 1 (Ogfrl1) (Mus musculus (Mouse)).